Here is a 239-residue protein sequence, read N- to C-terminus: Purine nucleoside phosphorylase DeoD-type (239 aa).

His5 is an a purine D-ribonucleoside binding site. Residues Gly21, Arg25, Arg44, and 88–91 contribute to the phosphate site; that span reads RVGS. Residues 180–182 and 204–205 each bind a purine D-ribonucleoside; these read EME and SD. Asp205 serves as the catalytic Proton donor.

It belongs to the PNP/UDP phosphorylase family. In terms of assembly, homohexamer; trimer of homodimers.

The catalysed reaction is a purine D-ribonucleoside + phosphate = a purine nucleobase + alpha-D-ribose 1-phosphate. The enzyme catalyses a purine 2'-deoxy-D-ribonucleoside + phosphate = a purine nucleobase + 2-deoxy-alpha-D-ribose 1-phosphate. Its function is as follows. Catalyzes the reversible phosphorolytic breakdown of the N-glycosidic bond in the beta-(deoxy)ribonucleoside molecules, with the formation of the corresponding free purine bases and pentose-1-phosphate. The chain is Purine nucleoside phosphorylase DeoD-type from Salmonella agona (strain SL483).